A 1081-amino-acid chain; its full sequence is Carbamoyl phosphate synthase large chain (1081 aa).

Residues 1–410 form a carboxyphosphate synthetic domain region; the sequence is MPKRTDIKTI…SFQKALRGLE (410 aa). Positions 129, 176, 182, 183, 215, 217, 222, 248, 249, 250, 292, and 306 each coordinate ATP. The ATP-grasp 1 domain maps to 133–335; that stretch reads KEAMTKIGLG…IAKVAAKLAV (203 aa). Positions 292, 306, and 308 each coordinate Mg(2+). The Mn(2+) site is built by glutamine 292, glutamate 306, and asparagine 308. Residues 411 to 558 form an oligomerization domain region; it reads VGVDGLDEKS…YEAEHGECEA (148 aa). Positions 559–944 are carbamoyl phosphate synthetic domain; that stretch reads DPTERKKIMV…ALFKSQLAAG (386 aa). Residues 683-878 enclose the ATP-grasp 2 domain; the sequence is QKLLHDLGLR…LAKVAARCMA (196 aa). ATP is bound by residues arginine 719, arginine 758, leucine 760, glutamate 765, glycine 790, valine 791, histidine 792, serine 793, glutamine 833, and glutamate 849. Positions 833, 849, and 851 each coordinate Mg(2+). Mn(2+)-binding residues include glutamine 833, glutamate 849, and asparagine 851. One can recognise an MGS-like domain in the interval 945–1081; sequence SRLPEKGTVL…YDLQGLHASL (137 aa). Residues 945-1081 form an allosteric domain region; the sequence is SRLPEKGTVL…YDLQGLHASL (137 aa).

The protein belongs to the CarB family. Composed of two chains; the small (or glutamine) chain promotes the hydrolysis of glutamine to ammonia, which is used by the large (or ammonia) chain to synthesize carbamoyl phosphate. Tetramer of heterodimers (alpha,beta)4. Mg(2+) serves as cofactor. Mn(2+) is required as a cofactor.

It catalyses the reaction hydrogencarbonate + L-glutamine + 2 ATP + H2O = carbamoyl phosphate + L-glutamate + 2 ADP + phosphate + 2 H(+). It carries out the reaction hydrogencarbonate + NH4(+) + 2 ATP = carbamoyl phosphate + 2 ADP + phosphate + 2 H(+). The protein operates within amino-acid biosynthesis; L-arginine biosynthesis; carbamoyl phosphate from bicarbonate: step 1/1. It functions in the pathway pyrimidine metabolism; UMP biosynthesis via de novo pathway; (S)-dihydroorotate from bicarbonate: step 1/3. In terms of biological role, large subunit of the glutamine-dependent carbamoyl phosphate synthetase (CPSase). CPSase catalyzes the formation of carbamoyl phosphate from the ammonia moiety of glutamine, carbonate, and phosphate donated by ATP, constituting the first step of 2 biosynthetic pathways, one leading to arginine and/or urea and the other to pyrimidine nucleotides. The large subunit (synthetase) binds the substrates ammonia (free or transferred from glutamine from the small subunit), hydrogencarbonate and ATP and carries out an ATP-coupled ligase reaction, activating hydrogencarbonate by forming carboxy phosphate which reacts with ammonia to form carbamoyl phosphate. This is Carbamoyl phosphate synthase large chain from Ralstonia nicotianae (strain ATCC BAA-1114 / GMI1000) (Ralstonia solanacearum).